Here is a 753-residue protein sequence, read N- to C-terminus: 5-methyltetrahydropteroyltriglutamate--homocysteine methyltransferase (753 aa).

5-methyltetrahydropteroyltri-L-glutamate-binding positions include 17-20 and lysine 117; that span reads RELK. L-homocysteine-binding positions include 431-433 and glutamate 484; that span reads IGS. Residues 431-433 and glutamate 484 contribute to the L-methionine site; that span reads IGS. 5-methyltetrahydropteroyltri-L-glutamate contacts are provided by residues 515-516 and tryptophan 561; that span reads RC. Aspartate 599 is a binding site for L-homocysteine. Residue aspartate 599 coordinates L-methionine. Glutamate 605 is a 5-methyltetrahydropteroyltri-L-glutamate binding site. The Zn(2+) site is built by histidine 641, cysteine 643, and glutamate 665. Residue histidine 694 is the Proton donor of the active site. Cysteine 726 contributes to the Zn(2+) binding site.

This sequence belongs to the vitamin-B12 independent methionine synthase family. Zn(2+) serves as cofactor.

It carries out the reaction 5-methyltetrahydropteroyltri-L-glutamate + L-homocysteine = tetrahydropteroyltri-L-glutamate + L-methionine. It functions in the pathway amino-acid biosynthesis; L-methionine biosynthesis via de novo pathway; L-methionine from L-homocysteine (MetE route): step 1/1. In terms of biological role, catalyzes the transfer of a methyl group from 5-methyltetrahydrofolate to homocysteine resulting in methionine formation. The sequence is that of 5-methyltetrahydropteroyltriglutamate--homocysteine methyltransferase from Shigella boydii serotype 4 (strain Sb227).